Reading from the N-terminus, the 225-residue chain is Uridylate kinase (225 aa).

ATP is bound at residue glycine 9–serine 10. Glycine 44 provides a ligand contact to UMP. ATP contacts are provided by glycine 45 and arginine 49. Residues aspartate 66 and threonine 114–threonine 120 each bind UMP. The ATP site is built by threonine 140, asparagine 141, tyrosine 146, and aspartate 149.

It belongs to the UMP kinase family. In terms of assembly, homohexamer.

The protein localises to the cytoplasm. It catalyses the reaction UMP + ATP = UDP + ADP. It functions in the pathway pyrimidine metabolism; CTP biosynthesis via de novo pathway; UDP from UMP (UMPK route): step 1/1. Inhibited by UTP. In terms of biological role, catalyzes the reversible phosphorylation of UMP to UDP. This is Uridylate kinase from Pyrococcus abyssi (strain GE5 / Orsay).